The following is a 581-amino-acid chain: Proline--tRNA ligase (581 aa).

Belongs to the class-II aminoacyl-tRNA synthetase family. ProS type 1 subfamily. Homodimer.

Its subcellular location is the cytoplasm. It catalyses the reaction tRNA(Pro) + L-proline + ATP = L-prolyl-tRNA(Pro) + AMP + diphosphate. Functionally, catalyzes the attachment of proline to tRNA(Pro) in a two-step reaction: proline is first activated by ATP to form Pro-AMP and then transferred to the acceptor end of tRNA(Pro). As ProRS can inadvertently accommodate and process non-cognate amino acids such as alanine and cysteine, to avoid such errors it has two additional distinct editing activities against alanine. One activity is designated as 'pretransfer' editing and involves the tRNA(Pro)-independent hydrolysis of activated Ala-AMP. The other activity is designated 'posttransfer' editing and involves deacylation of mischarged Ala-tRNA(Pro). The misacylated Cys-tRNA(Pro) is not edited by ProRS. In Kosmotoga olearia (strain ATCC BAA-1733 / DSM 21960 / TBF 19.5.1), this protein is Proline--tRNA ligase.